Consider the following 187-residue polypeptide: Ribosome-recycling factor (187 aa).

This sequence belongs to the RRF family.

It localises to the cytoplasm. Responsible for the release of ribosomes from messenger RNA at the termination of protein biosynthesis. May increase the efficiency of translation by recycling ribosomes from one round of translation to another. The chain is Ribosome-recycling factor from Rhodopseudomonas palustris (strain HaA2).